A 256-amino-acid polypeptide reads, in one-letter code: 5-oxoprolinase subunit A (256 aa).

This sequence belongs to the LamB/PxpA family. In terms of assembly, forms a complex composed of PxpA, PxpB and PxpC.

It catalyses the reaction 5-oxo-L-proline + ATP + 2 H2O = L-glutamate + ADP + phosphate + H(+). Catalyzes the cleavage of 5-oxoproline to form L-glutamate coupled to the hydrolysis of ATP to ADP and inorganic phosphate. This Cutibacterium acnes (strain DSM 16379 / KPA171202) (Propionibacterium acnes) protein is 5-oxoprolinase subunit A.